We begin with the raw amino-acid sequence, 397 residues long: Geranylgeranyl pyrophosphate synthase AN1592 (397 aa).

The segment at 1–67 is disordered; it reads MSPPLDSALE…SHDSSASSNI (67 aa). Residues 13-42 are compositionally biased toward basic and acidic residues; the sequence is SEYKETAFPRTEKDPSQYKEHDLVTPEKEI. Low complexity predominate over residues 52–67; sequence SHSSHGSHDSSASSNI. Residues lysine 120, arginine 123, and histidine 152 each coordinate isopentenyl diphosphate. Positions 159 and 163 each coordinate Mg(2+). Arginine 168 contacts dimethylallyl diphosphate. Arginine 169 is a binding site for isopentenyl diphosphate. 3 residues coordinate dimethylallyl diphosphate: lysine 247, threonine 248, and glutamine 281. Mg(2+) is bound at residue aspartate 284. Residues asparagine 288, lysine 298, and lysine 308 each coordinate dimethylallyl diphosphate.

The protein belongs to the FPP/GGPP synthase family. Mg(2+) serves as cofactor.

It carries out the reaction isopentenyl diphosphate + dimethylallyl diphosphate = (2E)-geranyl diphosphate + diphosphate. The enzyme catalyses isopentenyl diphosphate + (2E)-geranyl diphosphate = (2E,6E)-farnesyl diphosphate + diphosphate. It catalyses the reaction isopentenyl diphosphate + (2E,6E)-farnesyl diphosphate = (2E,6E,10E)-geranylgeranyl diphosphate + diphosphate. The protein operates within secondary metabolite biosynthesis; terpenoid biosynthesis. Geranylgeranyl pyrophosphate synthase; part of the gene cluster that mediates the biosynthesis of the diterpene ent-pimara-8(14),15-diene (PD). Within the cluster, the HMG-CoA reductase AN1593 functions in the mevalonate pathway, which produces isoprenoid precursors. The geranylgeranyl pyrophosphate (GGPP) synthase AN1592 is needed in the formation of GGPP, the precursor for diterpenes. Lastly, the pimaradiene synthase pbcA performs the 2 cyclization steps that convert GGPP to ent-pimara-8(14),15-diene. The putative roles of the remaining cluster enzymes in ent-pimara-8(14),15-diene biosynthesis is unclear. The cytochrome P450 monooxygenase AN1598, the glutathione S-transferase AN1595, the oxidoreductases AN1596 and AN1597 probably function as decorative enzymes. It is possible that in biological conditions the compound is oxidized to ent-pimara-8(14),15-dien-19-oic acid, which is a bioactive diterpene compound predominant in many plant extracts. The polypeptide is Geranylgeranyl pyrophosphate synthase AN1592 (Emericella nidulans (strain FGSC A4 / ATCC 38163 / CBS 112.46 / NRRL 194 / M139) (Aspergillus nidulans)).